We begin with the raw amino-acid sequence, 295 residues long: Small ribosomal subunit protein uS2 (295 aa).

Residues 264-295 are disordered; that stretch reads KFSKTKNIDEETNTEFEQALNDTDENKNADNA.

It belongs to the universal ribosomal protein uS2 family.

The protein is Small ribosomal subunit protein uS2 of Rickettsia akari (strain Hartford).